The following is a 138-amino-acid chain: Large ribosomal subunit protein uL16c (138 aa).

A disordered region spans residues 1 to 21; that stretch reads MLSPQKTKFRKQHRGRMKGVS. A compositionally biased stretch (basic residues) spans 7 to 21; sequence TKFRKQHRGRMKGVS.

Belongs to the universal ribosomal protein uL16 family. In terms of assembly, part of the 50S ribosomal subunit.

The protein localises to the plastid. It localises to the chloroplast. The chain is Large ribosomal subunit protein uL16c from Cycas taitungensis (Prince sago).